We begin with the raw amino-acid sequence, 355 residues long: UDP-3-O-acylglucosamine N-acyltransferase (355 aa).

Residue His-248 is the Proton acceptor of the active site.

It belongs to the transferase hexapeptide repeat family. LpxD subfamily. As to quaternary structure, homotrimer.

The catalysed reaction is a UDP-3-O-[(3R)-3-hydroxyacyl]-alpha-D-glucosamine + a (3R)-hydroxyacyl-[ACP] = a UDP-2-N,3-O-bis[(3R)-3-hydroxyacyl]-alpha-D-glucosamine + holo-[ACP] + H(+). Its pathway is bacterial outer membrane biogenesis; LPS lipid A biosynthesis. Catalyzes the N-acylation of UDP-3-O-acylglucosamine using 3-hydroxyacyl-ACP as the acyl donor. Is involved in the biosynthesis of lipid A, a phosphorylated glycolipid that anchors the lipopolysaccharide to the outer membrane of the cell. This is UDP-3-O-acylglucosamine N-acyltransferase from Syntrophobacter fumaroxidans (strain DSM 10017 / MPOB).